A 553-amino-acid chain; its full sequence is MQATVKRYPTTPISGQTMGTSGLRKRASEVENTPNYLENFVNAMFNAASNLQKPGKIIIGGDGRYLNLKALDIIIRVALSRGFTDIVVGKSGFMSTPAESATIIRRKAEAGFIMTASHNPAGKDHGDFGLKLNMSNGGPAPLEVTSKIEESARNIKEIVIAELNKPLTIDTIGDIEIECEGKKAIVHVIDPLEDYIAYLHECFDFEKLKQFVSKYHLKVQVDGFNAVTGIYNKKVFCELLGLPESSLKNAIPMPDFGGKHPDPNLTYAAELVHAVIPEDSPYDIGFAFDGDGDRNLIVGRGAFVSPSDSLAILSTKYNDIPFFVKNGFKGVARSMPTSAAVDHVTSITETPTGWKFFGNLMDSGKISLCGEESFGTGCCGIREKDGIWAALCWVSILAAESERAQRLVGVKEILENHWAKYGRNYYQRYDFDEVDKKAAEDMMQMMRDNAKTVKCDLNGVPLKFCDDFEYHDSVDGSVTSKQGIRFVFEDGSRIIFRLSGTGSVGATIRVYFDKYSKDYKADQNKMLADMVTVAYAVSQITKFTGREKPSVVT.

The segment at 1 to 24 (MQATVKRYPTTPISGQTMGTSGLR) is disordered. Over residues 11-20 (TPISGQTMGT) the composition is skewed to polar residues. Substrate is bound by residues threonine 20, arginine 24, 117 to 118 (SH), and lysine 131. The active-site Phosphoserine intermediate is serine 117. Serine 117 is a Mg(2+) binding site. Residues aspartate 289, aspartate 291, and aspartate 293 each contribute to the Mg(2+) site. Substrate is bound by residues 293 to 294 (DR), threonine 352, 371 to 373 (EES), lysine 384, and arginine 509.

Belongs to the phosphohexose mutase family. The cofactor is Mg(2+).

Its subcellular location is the cytoplasm. The enzyme catalyses alpha-D-glucose 1-phosphate = alpha-D-glucose 6-phosphate. This enzyme participates in both the breakdown and synthesis of glucose. The chain is Phosphoglucomutase (pgm) from Entamoeba dispar.